We begin with the raw amino-acid sequence, 138 residues long: Nucleoside diphosphate kinase (138 aa).

6 residues coordinate ATP: K11, F59, R87, T93, R104, and N114. The Pros-phosphohistidine intermediate role is filled by H117.

The protein belongs to the NDK family. The cofactor is Mg(2+).

The protein localises to the cytoplasm. It carries out the reaction a 2'-deoxyribonucleoside 5'-diphosphate + ATP = a 2'-deoxyribonucleoside 5'-triphosphate + ADP. The enzyme catalyses a ribonucleoside 5'-diphosphate + ATP = a ribonucleoside 5'-triphosphate + ADP. Functionally, major role in the synthesis of nucleoside triphosphates other than ATP. The ATP gamma phosphate is transferred to the NDP beta phosphate via a ping-pong mechanism, using a phosphorylated active-site intermediate. This is Nucleoside diphosphate kinase from Saccharolobus solfataricus (strain ATCC 35092 / DSM 1617 / JCM 11322 / P2) (Sulfolobus solfataricus).